The following is a 149-amino-acid chain: Ribosome maturation factor RimP (149 aa).

This sequence belongs to the RimP family.

It is found in the cytoplasm. Required for maturation of 30S ribosomal subunits. This is Ribosome maturation factor RimP from Neisseria meningitidis serogroup A / serotype 4A (strain DSM 15465 / Z2491).